The sequence spans 210 residues: Large ribosomal subunit protein bL25 (210 aa).

It belongs to the bacterial ribosomal protein bL25 family. CTC subfamily. Part of the 50S ribosomal subunit; part of the 5S rRNA/L5/L18/L25 subcomplex. Contacts the 5S rRNA. Binds to the 5S rRNA independently of L5 and L18.

Functionally, this is one of the proteins that binds to the 5S RNA in the ribosome where it forms part of the central protuberance. This is Large ribosomal subunit protein bL25 from Herminiimonas arsenicoxydans.